Consider the following 301-residue polypeptide: Tetratricopeptide repeat domain-containing protein PYG7, chloroplastic (301 aa).

Residues 1 to 61 (MFESNMVLQT…FHDYVFAEIS (61 aa)) constitute a chloroplast transit peptide. The next 2 helical transmembrane spans lie at 82–102 (TFLLGQSLLMVSAHPQLAAAA) and 121–141 (IQLSYLLLLLGLLGVGTFYVI). 3 TPR repeats span residues 168–201 (ATELFELGAVMLRRKFYPAANKFLQQAIQKWDGD), 206–239 (AQVYNALGVSYVREDKLDKGIAQFEMAVKLQPGY), and 240–273 (VTAWNNLGDAYEKKKELPLALNAFEEVLLFDPNN).

Interacts with PSA3.

Its subcellular location is the plastid. The protein resides in the chloroplast thylakoid membrane. Nuclear genome-encoded factor required for the accumulation of photosystem I (PSI). Functions as a PSI biogenesis factor. Cooperates with PSA3 to promote the stable assembly of PSI in the thylakoid membrane. May target primarily the PsaC subunit. In Arabidopsis thaliana (Mouse-ear cress), this protein is Tetratricopeptide repeat domain-containing protein PYG7, chloroplastic.